The following is a 401-amino-acid chain: UDP-GlcNAc:betaGal beta-1,3-N-acetylglucosaminyltransferase 9 (401 aa).

Residues 1-10 (MRRRLRLRRE) lie on the Cytoplasmic side of the membrane. Residues 11–31 (ALLTLLLGATLGLLLYAQQEG) traverse the membrane as a helical; Signal-anchor for type II membrane protein segment. Residues 32-401 (AAPTTSAPRA…VPAGPFQWGP (370 aa)) are Lumenal-facing. The tract at residues 33-85 (APTTSAPRAQGRAAPGPTPGLRVFQAPDTGAAPPAYEGDTPEPPTPTGPFDFG) is disordered. The span at 38 to 47 (APRAQGRAAP) shows a compositional bias: low complexity.

The protein belongs to the glycosyltransferase 31 family.

The protein localises to the golgi apparatus membrane. The polypeptide is UDP-GlcNAc:betaGal beta-1,3-N-acetylglucosaminyltransferase 9 (Bos taurus (Bovine)).